Reading from the N-terminus, the 475-residue chain is LEC14B homolog (475 aa).

Residues 1-34 (MSYRTRFGKDNSACDSGNAVEGSGSSKGPNEVSN) form a disordered region. A compositionally biased stretch (polar residues) spans 23–33 (SGSSKGPNEVS). 5 WD repeats span residues 211-240 (DEFG…YVYD), 252-283 (AHSS…KVWD), 299-329 (GHLE…QLWD), 375-411 (GHGV…YIYD), and 423-453 (HHEG…ARWE).

It belongs to the WD repeat LEC14B family.

In Prunus armeniaca (Apricot), this protein is LEC14B homolog.